The sequence spans 295 residues: Serpentine receptor class gamma-53 (295 aa).

The next 6 membrane-spanning stretches (helical) occupy residues 7-27 (IWLC…VLLS), 39-61 (VITM…RMVF), 121-141 (FYLL…QLLY), 173-193 (CFMS…LYQV), 211-230 (MSLI…AWQT), and 241-261 (IELL…ILLI).

This sequence belongs to the nematode receptor-like protein srg family.

Its subcellular location is the membrane. This Caenorhabditis elegans protein is Serpentine receptor class gamma-53 (srg-53).